Reading from the N-terminus, the 354-residue chain is Holliday junction branch migration complex subunit RuvB (354 aa).

The segment at 5 to 197 is large ATPase domain (RuvB-L); that stretch reads TDDFSAADLP…FGIVARLEFY (193 aa). ATP contacts are provided by residues Leu36, Arg37, Gly78, Lys81, Thr82, Thr83, 144-146, Arg187, Tyr197, and Arg234; that span reads EDY. Thr82 contacts Mg(2+). The tract at residues 198-268 is small ATPAse domain (RuvB-S); sequence TAEELGRIVR…IANKALAMLD (71 aa). Residues 271–354 are head domain (RuvB-H); that stretch reads PQGFDVMDRK…PPVSGNDMFT (84 aa). Residues Arg307, Arg326, and Arg331 each contribute to the DNA site.

The protein belongs to the RuvB family. Homohexamer. Forms an RuvA(8)-RuvB(12)-Holliday junction (HJ) complex. HJ DNA is sandwiched between 2 RuvA tetramers; dsDNA enters through RuvA and exits via RuvB. An RuvB hexamer assembles on each DNA strand where it exits the tetramer. Each RuvB hexamer is contacted by two RuvA subunits (via domain III) on 2 adjacent RuvB subunits; this complex drives branch migration. In the full resolvosome a probable DNA-RuvA(4)-RuvB(12)-RuvC(2) complex forms which resolves the HJ.

It is found in the cytoplasm. It catalyses the reaction ATP + H2O = ADP + phosphate + H(+). The RuvA-RuvB-RuvC complex processes Holliday junction (HJ) DNA during genetic recombination and DNA repair, while the RuvA-RuvB complex plays an important role in the rescue of blocked DNA replication forks via replication fork reversal (RFR). RuvA specifically binds to HJ cruciform DNA, conferring on it an open structure. The RuvB hexamer acts as an ATP-dependent pump, pulling dsDNA into and through the RuvAB complex. RuvB forms 2 homohexamers on either side of HJ DNA bound by 1 or 2 RuvA tetramers; 4 subunits per hexamer contact DNA at a time. Coordinated motions by a converter formed by DNA-disengaged RuvB subunits stimulates ATP hydrolysis and nucleotide exchange. Immobilization of the converter enables RuvB to convert the ATP-contained energy into a lever motion, pulling 2 nucleotides of DNA out of the RuvA tetramer per ATP hydrolyzed, thus driving DNA branch migration. The RuvB motors rotate together with the DNA substrate, which together with the progressing nucleotide cycle form the mechanistic basis for DNA recombination by continuous HJ branch migration. Branch migration allows RuvC to scan DNA until it finds its consensus sequence, where it cleaves and resolves cruciform DNA. In Polaromonas sp. (strain JS666 / ATCC BAA-500), this protein is Holliday junction branch migration complex subunit RuvB.